Consider the following 1070-residue polypeptide: DNA-directed RNA polymerase subunit beta (1070 aa).

The protein belongs to the RNA polymerase beta chain family. As to quaternary structure, in plastids the minimal PEP RNA polymerase catalytic core is composed of four subunits: alpha, beta, beta', and beta''. When a (nuclear-encoded) sigma factor is associated with the core the holoenzyme is formed, which can initiate transcription.

It is found in the plastid. The protein resides in the chloroplast. The enzyme catalyses RNA(n) + a ribonucleoside 5'-triphosphate = RNA(n+1) + diphosphate. DNA-dependent RNA polymerase catalyzes the transcription of DNA into RNA using the four ribonucleoside triphosphates as substrates. The protein is DNA-directed RNA polymerase subunit beta of Nandina domestica (Heavenly bamboo).